The following is a 205-amino-acid chain: GTP cyclohydrolase-2 (205 aa).

49–53 (RIHSE) is a GTP binding site. Zn(2+) contacts are provided by cysteine 54, cysteine 65, and cysteine 67. GTP contacts are provided by residues glutamine 70, 92–94 (EGR), and threonine 114. Aspartate 126 serves as the catalytic Proton acceptor. Arginine 128 (nucleophile) is an active-site residue. The GTP site is built by threonine 149 and lysine 154.

This sequence belongs to the GTP cyclohydrolase II family. Requires Zn(2+) as cofactor.

The catalysed reaction is GTP + 4 H2O = 2,5-diamino-6-hydroxy-4-(5-phosphoribosylamino)-pyrimidine + formate + 2 phosphate + 3 H(+). Its pathway is cofactor biosynthesis; riboflavin biosynthesis; 5-amino-6-(D-ribitylamino)uracil from GTP: step 1/4. Catalyzes the conversion of GTP to 2,5-diamino-6-ribosylamino-4(3H)-pyrimidinone 5'-phosphate (DARP), formate and pyrophosphate. This chain is GTP cyclohydrolase-2, found in Shewanella amazonensis (strain ATCC BAA-1098 / SB2B).